The sequence spans 132 residues: Small ribosomal subunit protein uS8c (132 aa).

It belongs to the universal ribosomal protein uS8 family. As to quaternary structure, part of the 30S ribosomal subunit.

The protein resides in the plastid. Its subcellular location is the chloroplast. Its function is as follows. One of the primary rRNA binding proteins, it binds directly to 16S rRNA central domain where it helps coordinate assembly of the platform of the 30S subunit. The chain is Small ribosomal subunit protein uS8c (rps8) from Cycas taitungensis (Prince sago).